Here is a 218-residue protein sequence, read N- to C-terminus: 3-dehydroquinate dehydratase (218 aa).

Residues E29–R31 and R56 contribute to the 3-dehydroquinate site. Residue H116 is the Proton donor/acceptor of the active site. K142 serves as the catalytic Schiff-base intermediate with substrate. 3-dehydroquinate contacts are provided by R180, S200, and Q204.

This sequence belongs to the type-I 3-dehydroquinase family. As to quaternary structure, homodimer.

The catalysed reaction is 3-dehydroquinate = 3-dehydroshikimate + H2O. Its pathway is metabolic intermediate biosynthesis; chorismate biosynthesis; chorismate from D-erythrose 4-phosphate and phosphoenolpyruvate: step 3/7. Its function is as follows. Involved in the third step of the chorismate pathway, which leads to the biosynthesis of aromatic amino acids. Catalyzes the cis-dehydration of 3-dehydroquinate (DHQ) and introduces the first double bond of the aromatic ring to yield 3-dehydroshikimate. This chain is 3-dehydroquinate dehydratase, found in Methanococcus maripaludis (strain C5 / ATCC BAA-1333).